Here is a 706-residue protein sequence, read N- to C-terminus: Elongation factor G (706 aa).

One can recognise a tr-type G domain in the interval 15-291 (LKTRNIGISA…GVLDYLASPV (277 aa)). Residues 24 to 31 (AHIDSGKT), 91 to 95 (DTPGH), and 145 to 148 (NKLD) contribute to the GTP site.

This sequence belongs to the TRAFAC class translation factor GTPase superfamily. Classic translation factor GTPase family. EF-G/EF-2 subfamily.

The protein resides in the cytoplasm. Catalyzes the GTP-dependent ribosomal translocation step during translation elongation. During this step, the ribosome changes from the pre-translocational (PRE) to the post-translocational (POST) state as the newly formed A-site-bound peptidyl-tRNA and P-site-bound deacylated tRNA move to the P and E sites, respectively. Catalyzes the coordinated movement of the two tRNA molecules, the mRNA and conformational changes in the ribosome. This chain is Elongation factor G, found in Leptospira borgpetersenii serovar Hardjo-bovis (strain JB197).